A 458-amino-acid polypeptide reads, in one-letter code: Exodeoxyribonuclease 7 large subunit (458 aa).

The protein belongs to the XseA family. In terms of assembly, heterooligomer composed of large and small subunits.

It is found in the cytoplasm. The catalysed reaction is Exonucleolytic cleavage in either 5'- to 3'- or 3'- to 5'-direction to yield nucleoside 5'-phosphates.. In terms of biological role, bidirectionally degrades single-stranded DNA into large acid-insoluble oligonucleotides, which are then degraded further into small acid-soluble oligonucleotides. This chain is Exodeoxyribonuclease 7 large subunit, found in Yersinia enterocolitica serotype O:8 / biotype 1B (strain NCTC 13174 / 8081).